The following is a 149-amino-acid chain: D-aminoacyl-tRNA deacylase (149 aa).

A Gly-cisPro motif, important for rejection of L-amino acids motif is present at residues 137 to 138 (GP).

The protein belongs to the DTD family. In terms of assembly, homodimer.

The protein resides in the cytoplasm. It carries out the reaction glycyl-tRNA(Ala) + H2O = tRNA(Ala) + glycine + H(+). The enzyme catalyses a D-aminoacyl-tRNA + H2O = a tRNA + a D-alpha-amino acid + H(+). An aminoacyl-tRNA editing enzyme that deacylates mischarged D-aminoacyl-tRNAs. Also deacylates mischarged glycyl-tRNA(Ala), protecting cells against glycine mischarging by AlaRS. Acts via tRNA-based rather than protein-based catalysis; rejects L-amino acids rather than detecting D-amino acids in the active site. By recycling D-aminoacyl-tRNA to D-amino acids and free tRNA molecules, this enzyme counteracts the toxicity associated with the formation of D-aminoacyl-tRNA entities in vivo and helps enforce protein L-homochirality. This chain is D-aminoacyl-tRNA deacylase, found in Thermosipho africanus (strain TCF52B).